Here is a 384-residue protein sequence, read N- to C-terminus: DNA replication and repair protein RecF (384 aa).

ATP is bound at residue 30 to 37 (GNNAQGKS).

It belongs to the RecF family.

It is found in the cytoplasm. The RecF protein is involved in DNA metabolism; it is required for DNA replication and normal SOS inducibility. RecF binds preferentially to single-stranded, linear DNA. It also seems to bind ATP. This is DNA replication and repair protein RecF from Gloeothece citriformis (strain PCC 7424) (Cyanothece sp. (strain PCC 7424)).